Reading from the N-terminus, the 147-residue chain is MSDTIHVLNGPNLNLLGTREPGIYGAATLADVEALCRTTAAQHGLELVFRQSNHEGDLVDWIQAAAGSVGVVLNAGAYTHTSVALRDAIAGTGVPAVEVHLSNVFAREPFRHHSYLSPVVRGVICGFGPQSYVLGITALATTRPARP.

Tyr-24 functions as the Proton acceptor in the catalytic mechanism. Residues Asn-74, His-80, and Asp-87 each contribute to the substrate site. His-100 serves as the catalytic Proton donor. Residues 101 to 102 (LS) and Arg-111 each bind substrate.

This sequence belongs to the type-II 3-dehydroquinase family. As to quaternary structure, homododecamer.

The enzyme catalyses 3-dehydroquinate = 3-dehydroshikimate + H2O. It participates in metabolic intermediate biosynthesis; chorismate biosynthesis; chorismate from D-erythrose 4-phosphate and phosphoenolpyruvate: step 3/7. Its function is as follows. Catalyzes a trans-dehydration via an enolate intermediate. In Azorhizobium caulinodans (strain ATCC 43989 / DSM 5975 / JCM 20966 / LMG 6465 / NBRC 14845 / NCIMB 13405 / ORS 571), this protein is 3-dehydroquinate dehydratase.